The following is a 222-amino-acid chain: Adenylate kinase (222 aa).

Position 2 (S2) is a propeptide, removed in mature form. 2 positions are modified to N-acetylserine: S2 and S3. 16–21 serves as a coordination point for ATP; sequence GAGKGT. The tract at residues 36–65 is NMP; sequence ATGDMLRSQIAKGTQLGLEAKKIMDQGGLV. AMP contacts are provided by residues T37, R42, 63 to 65, 92 to 95, and Q99; these read GLV and GFPR. An LID region spans residues 133 to 170; that stretch reads GRLIHPASGRSYHKIFNPPKEDMKDDVTGEALVQRSDD. ATP-binding positions include R134 and 143-144; that span reads SY. AMP-binding residues include R167 and R178. Residue Q206 coordinates ATP.

The protein belongs to the adenylate kinase family. AK2 subfamily. Monomer.

Its subcellular location is the cytoplasm. The protein resides in the cytosol. It is found in the mitochondrion intermembrane space. The enzyme catalyses AMP + ATP = 2 ADP. Functionally, catalyzes the reversible transfer of the terminal phosphate group between ATP and AMP. Plays an important role in cellular energy homeostasis and in adenine nucleotide metabolism. Adenylate kinase activity is critical for regulation of the phosphate utilization and the AMP de novo biosynthesis pathways. This chain is Adenylate kinase, found in Saccharomyces cerevisiae (strain RM11-1a) (Baker's yeast).